A 61-amino-acid polypeptide reads, in one-letter code: Large ribosomal subunit protein bL32 (61 aa).

Residues 1–18 (MAIVPKRKTSKQRKRKRQ) are compositionally biased toward basic residues. Positions 1-20 (MAIVPKRKTSKQRKRKRQTH) are disordered.

This sequence belongs to the bacterial ribosomal protein bL32 family.

The polypeptide is Large ribosomal subunit protein bL32 (rpmF) (Mycoplasmopsis pulmonis (strain UAB CTIP) (Mycoplasma pulmonis)).